The sequence spans 1049 residues: Self-sufficient cytochrome P450 monooxygenase CYP505E4 (1049 aa).

Cysteine 405 is a heme binding site. Residues 461-470 (SATALSQHNM) show a composition bias toward polar residues. Positions 461 to 491 (SATALSQHNMSAGATASPGSSTHLAGDENGQ) are disordered. Residues 471 to 482 (SAGATASPGSST) show a composition bias toward low complexity. In terms of domain architecture, Flavodoxin-like spans 499-640 (ISFFYGSNSG…DLEVWEETNL (142 aa)). Residues 505–509 (SNSGT) and 584–616 (VFGCGHQDWTKTFYRIPILIDDLMHKAGATRLT) contribute to the FMN site. The 229-residue stretch at 678–906 (RDLVEGKVTA…RPAKDAFHLP (229 aa)) folds into the FAD-binding FR-type domain.

The protein in the N-terminal section; belongs to the cytochrome P450 family. It depends on FAD as a cofactor. Requires FMN as cofactor. Heme is required as a cofactor.

It carries out the reaction 2 oxidized [cytochrome P450] + NADPH = 2 reduced [cytochrome P450] + NADP(+) + H(+). The catalysed reaction is an organic molecule + reduced [NADPH--hemoprotein reductase] + O2 = an alcohol + oxidized [NADPH--hemoprotein reductase] + H2O + H(+). It catalyses the reaction dodecanoate + reduced [NADPH--hemoprotein reductase] + O2 = 5-hydroxydodecanoate + oxidized [NADPH--hemoprotein reductase] + H2O + H(+). The enzyme catalyses dodecan-1-ol + reduced [NADPH--hemoprotein reductase] + O2 = 1,5-dodecanediol + oxidized [NADPH--hemoprotein reductase] + H2O + H(+). It carries out the reaction dodecanoate + reduced [NADPH--hemoprotein reductase] + O2 = 9-hydroxydodecanoate + oxidized [NADPH--hemoprotein reductase] + H2O + H(+). The catalysed reaction is dodecan-1-ol + reduced [NADPH--hemoprotein reductase] + O2 = 1,4-dodecanediol + oxidized [NADPH--hemoprotein reductase] + H2O + H(+). It catalyses the reaction dodecan-1-ol + reduced [NADPH--hemoprotein reductase] + O2 = 1,6-dodecanediol + oxidized [NADPH--hemoprotein reductase] + H2O + H(+). In terms of biological role, self-sufficient cytochrome P450 monooxygenase that catalyzes the regioselective in-chain hydroxylation of alkanes, fatty alcohols, and fatty acids at the omega-7 position. Performs hydroxylation of C10-C16 n-alkanes and C12 and C14 fatty alcohols; and thereby enables the one step biocatalytic synthesis of rare alcohols such as 5-dodecanol and 7-tetradecanol. Converts 1-dodecanol into 1,5-dodecanediol as major product with very little sub-terminally hydroxylated products with the 1,4-dodecanediol and 1,6-dodecanediol more abundant. Converts dodecanoic acid to 5-hydroxydodecanoic acid which can be further converted into delta-dodecalactone by lactonization of the 5-hydroxy acid at low pH. Also gives sub-terminal hydroxylation of dodecanoic acid with 9-hydroxydodecanoic acid being the second most abundant product. Does not show any significant activity toward tetradecanoic acid. The sequence is that of Self-sufficient cytochrome P450 monooxygenase CYP505E4 from Penicillium camemberti (strain FM 013).